We begin with the raw amino-acid sequence, 334 residues long: Ketol-acid reductoisomerase (NADP(+)) (334 aa).

Residues 1 to 181 (MTTVYYDQDV…GATRAGVIET (181 aa)) enclose the KARI N-terminal Rossmann domain. Residues 25–28 (YGSQ), R48, S52, and 82–85 (DEIQ) each bind NADP(+). H107 is an active-site residue. G133 provides a ligand contact to NADP(+). A KARI C-terminal knotted domain is found at 182–327 (TFKEETETDL…RELREMMPFI (146 aa)). The Mg(2+) site is built by D190, E194, E226, and E230. S251 is a substrate binding site.

It belongs to the ketol-acid reductoisomerase family. The cofactor is Mg(2+).

It catalyses the reaction (2R)-2,3-dihydroxy-3-methylbutanoate + NADP(+) = (2S)-2-acetolactate + NADPH + H(+). It carries out the reaction (2R,3R)-2,3-dihydroxy-3-methylpentanoate + NADP(+) = (S)-2-ethyl-2-hydroxy-3-oxobutanoate + NADPH + H(+). It functions in the pathway amino-acid biosynthesis; L-isoleucine biosynthesis; L-isoleucine from 2-oxobutanoate: step 2/4. The protein operates within amino-acid biosynthesis; L-valine biosynthesis; L-valine from pyruvate: step 2/4. Involved in the biosynthesis of branched-chain amino acids (BCAA). Catalyzes an alkyl-migration followed by a ketol-acid reduction of (S)-2-acetolactate (S2AL) to yield (R)-2,3-dihydroxy-isovalerate. In the isomerase reaction, S2AL is rearranged via a Mg-dependent methyl migration to produce 3-hydroxy-3-methyl-2-ketobutyrate (HMKB). In the reductase reaction, this 2-ketoacid undergoes a metal-dependent reduction by NADPH to yield (R)-2,3-dihydroxy-isovalerate. The protein is Ketol-acid reductoisomerase (NADP(+)) of Staphylococcus aureus (strain Mu3 / ATCC 700698).